Here is a 329-residue protein sequence, read N- to C-terminus: Sulfate-binding protein (329 aa).

The signal sequence occupies residues 1–19 (MKKWGVGFTLLLASTSILA).

The protein belongs to the prokaryotic sulfate-binding protein family.

The protein localises to the periplasm. Functionally, this protein specifically binds sulfate and is involved in its transmembrane transport. The polypeptide is Sulfate-binding protein (sbp) (Salmonella typhimurium (strain LT2 / SGSC1412 / ATCC 700720)).